Consider the following 125-residue polypeptide: MADIKALVEELSKLTVLEAAELAKALEEEWGVSAAAAVAVAGPAGGGDAAAPAEEKDEFDVILTGDGGKKIQVIKEVRAITGLGLTEAKGLVEGAPKPIKEGVNKAEAEEIKGKIEAAGGTVELK.

Belongs to the bacterial ribosomal protein bL12 family. In terms of assembly, homodimer. Part of the ribosomal stalk of the 50S ribosomal subunit. Forms a multimeric L10(L12)X complex, where L10 forms an elongated spine to which 2 to 4 L12 dimers bind in a sequential fashion. Binds GTP-bound translation factors.

Functionally, forms part of the ribosomal stalk which helps the ribosome interact with GTP-bound translation factors. Is thus essential for accurate translation. The protein is Large ribosomal subunit protein bL12 of Erythrobacter litoralis (strain HTCC2594).